The chain runs to 155 residues: uncharacterized protein (155 aa).

Over residues 1–14 (MLTLSGWITTQVPP) the composition is skewed to polar residues. The segment at 1-44 (MLTLSGWITTQVPPSSRAAADAKAARTGTAEQAEDPAAGTDAAD) is disordered. Residues 17 to 30 (RAAADAKAARTGTA) are compositionally biased toward low complexity.

This is an uncharacterized protein from Pseudomonas aeruginosa (strain ATCC 15692 / DSM 22644 / CIP 104116 / JCM 14847 / LMG 12228 / 1C / PRS 101 / PAO1).